The sequence spans 881 residues: Rho GTPase-activating protein 17 (881 aa).

The BAR domain occupies 14 to 246 (QTVGRAEKTE…MRAHQDKWAE (233 aa)). In terms of domain architecture, Rho-GAP spans 252-442 (TPLEEHLKRS…PIIQHADWFF (191 aa)). Residues 459–475 (TPSSNHSFHTGNDSDSG) are compositionally biased toward polar residues. The segment at 459–482 (TPSSNHSFHTGNDSDSGTLERKRP) is disordered. Serine 484 and serine 575 each carry phosphoserine. A disordered region spans residues 511-881 (GGTLNRKHIS…IDNDTESTAL (371 aa)). Over residues 592 to 617 (RNNSQIASGQNQPQAAAGSHQLSMGQ) the composition is skewed to polar residues. Residues 637–650 (APAPPKPGNPPPGH) are compositionally biased toward pro residues. The span at 653-664 (GQSSSGTSQHPP) shows a compositional bias: low complexity. A compositionally biased stretch (pro residues) spans 665–678 (SLSPKPPTRSPSPP). 2 positions are modified to phosphothreonine: threonine 679 and threonine 682. Residues 679 to 698 (TQHTGQPPGQPSAPSQLSAP) are compositionally biased toward low complexity. Residues serine 702 and serine 704 each carry the phosphoserine modification. Pro residues-rich tracts occupy residues 712–721 (NHPPPQPPTQ), 752–764 (HTPP…PSTP), and 806–816 (RPSVPPPPQPP). A phosphothreonine mark is found at threonine 753, threonine 757, and threonine 759. The SH3-binding signature appears at 753–766 (TPPQTPTPPSTPPL). Serine 762 carries the post-translational modification Phosphoserine. Residue threonine 763 is modified to Phosphothreonine. Residues 822-844 (GDSSLTNTAPTASKIVTDSNSRV) show a composition bias toward polar residues. Over residues 845-865 (SEPHRSIFPEMHSDSASKDVP) the composition is skewed to basic and acidic residues. The segment covering 872 to 881 (IDNDTESTAL) has biased composition (acidic residues).

Component of a complex whose core is composed of ARHGAP17, AMOT, PALS1, PATJ and PARD3/PAR3. Interacts with NHERF1, FNBP1, TRIP10, CAPZA (CAPZA1, CAPZA2 or CAPZA3), CAPZB, CD2AP and SH3KBP1/CIN85. As to expression, ubiquitously expressed. Expressed at higher level in heart and placenta.

Its subcellular location is the membrane. The protein localises to the cytoplasm. It is found in the cell junction. It localises to the tight junction. Functionally, rho GTPase-activating protein involved in the maintenance of tight junction by regulating the activity of CDC42, thereby playing a central role in apical polarity of epithelial cells. Specifically acts as a GTPase activator for the CDC42 GTPase by converting it to an inactive GDP-bound state. The complex formed with AMOT acts by regulating the uptake of polarity proteins at tight junctions, possibly by deciding whether tight junction transmembrane proteins are recycled back to the plasma membrane or sent elsewhere. Participates in the Ca(2+)-dependent regulation of exocytosis, possibly by catalyzing GTPase activity of Rho family proteins and by inducing the reorganization of the cortical actin filaments. Acts as a GTPase activator in vitro for RAC1. The polypeptide is Rho GTPase-activating protein 17 (ARHGAP17) (Homo sapiens (Human)).